A 388-amino-acid polypeptide reads, in one-letter code: Processive diacylglycerol beta-glucosyltransferase (388 aa).

This sequence belongs to the glycosyltransferase 28 family. UgtP subfamily.

The protein localises to the cell membrane. The catalysed reaction is a 1,2-diacyl-3-O-(beta-D-glucopyranosyl)-sn-glycerol + UDP-alpha-D-glucose = a 1,2-diacyl-3-O-(beta-D-Glc-(1-&gt;6)-beta-D-Glc)-sn-glycerol + UDP + H(+). The enzyme catalyses a 1,2-diacyl-3-O-(beta-D-Glc-(1-&gt;6)-beta-D-Glc)-sn-glycerol + UDP-alpha-D-glucose = a 1,2-diacyl-3-O-(beta-D-Glc-(1-&gt;6)-beta-D-Glc-(1-&gt;6)-beta-D-Glc)-sn-glycerol + UDP + H(+). It catalyses the reaction a 1,2-diacyl-sn-glycerol + UDP-alpha-D-glucose = a 1,2-diacyl-3-O-(beta-D-glucopyranosyl)-sn-glycerol + UDP + H(+). It participates in glycolipid metabolism; diglucosyl-diacylglycerol biosynthesis. In terms of biological role, processive glucosyltransferase involved in the biosynthesis of both the bilayer- and non-bilayer-forming membrane glucolipids. Is able to successively transfer up to three glucosyl residues to diacylglycerol (DAG), thereby catalyzing the formation of beta-monoglucosyl-DAG (3-O-(beta-D-glucopyranosyl)-1,2-diacyl-sn-glycerol), beta-diglucosyl-DAG (3-O-(beta-D-glucopyranosyl-beta-(1-&gt;6)-D-glucopyranosyl)-1,2-diacyl-sn-glycerol) and beta-triglucosyl-DAG (3-O-(beta-D-glucopyranosyl-beta-(1-&gt;6)-D-glucopyranosyl-beta-(1-&gt;6)-D-glucopyranosyl)-1,2-diacyl-sn-glycerol). Beta-diglucosyl-DAG is the predominant glycolipid found in Bacillales and is also used as a membrane anchor for lipoteichoic acid (LTA). The chain is Processive diacylglycerol beta-glucosyltransferase from Bacillus cereus (strain ATCC 14579 / DSM 31 / CCUG 7414 / JCM 2152 / NBRC 15305 / NCIMB 9373 / NCTC 2599 / NRRL B-3711).